The primary structure comprises 364 residues: Lytic cellulose monooxygenase (364 aa).

The signal sequence occupies residues 1–34; the sequence is MARRSRYISLAAVMATLLSALGVTFLLGQGRAEA. Residues histidine 35 and histidine 144 each coordinate Cu cation. Residues 35–225 enclose the Chitin-binding type-4 domain; it reads HGVAMMPGSR…QENFFSCSDV (191 aa). The interval 234–261 is disordered; that stretch reads VTGIRGSGGTPTPTPTPTTPPTTPPPTH. Pro residues predominate over residues 245-260; the sequence is TPTPTPTTPPTTPPPT. The CBM2 domain maps to 258-364; it reads PPTHSGSCMA…PVGTIGCVAP (107 aa).

Cu(2+) serves as cofactor.

It localises to the secreted. It carries out the reaction [(1-&gt;4)-beta-D-glucosyl]n+m + reduced acceptor + O2 = [(1-&gt;4)-beta-D-glucosyl]m-1-(1-&gt;4)-D-glucono-1,5-lactone + [(1-&gt;4)-beta-D-glucosyl]n + acceptor + H2O.. It participates in glycan metabolism; cellulose degradation. Functionally, involved in the degradation of lignocellulosic biomass. Catalyzes the oxidative cleavage of glycosidic bonds in cellulosic substrates via a copper-dependent mechanism. Degrades phosphoric acid swollen cellulose (PASC) to oxidized cellooligosaccharides with degrees of polymerization of 4-8. Also shows activity on agricultural fiber paper pulps such as flax pulp. Is not active on chitin. The polypeptide is Lytic cellulose monooxygenase (Streptomyces ambofaciens (strain ATCC 23877 / 3486 / DSM 40053 / JCM 4204 / NBRC 12836 / NRRL B-2516)).